The chain runs to 235 residues: Regulator of G-protein signaling 18 (235 aa).

The residue at position 49 (S49) is a Phosphoserine. The RGS domain occupies 86 to 202 (SFDKLLSHRD…LKSEIYLHLI (117 aa)). A phosphoserine mark is found at S216 and S218.

The protein localises to the cytoplasm. Functionally, inhibits signal transduction by increasing the GTPase activity of G protein alpha subunits thereby driving them into their inactive GDP-bound form. Binds to G(i) alpha-1, G(i) alpha-2, G(i) alpha-3 and G(q) alpha. This Rattus norvegicus (Rat) protein is Regulator of G-protein signaling 18 (Rgs18).